Here is a 179-residue protein sequence, read N- to C-terminus: Adenine phosphoribosyltransferase (179 aa).

This sequence belongs to the purine/pyrimidine phosphoribosyltransferase family. As to quaternary structure, homodimer.

Its subcellular location is the cytoplasm. It catalyses the reaction AMP + diphosphate = 5-phospho-alpha-D-ribose 1-diphosphate + adenine. Its pathway is purine metabolism; AMP biosynthesis via salvage pathway; AMP from adenine: step 1/1. Catalyzes a salvage reaction resulting in the formation of AMP, that is energically less costly than de novo synthesis. This chain is Adenine phosphoribosyltransferase, found in Jannaschia sp. (strain CCS1).